Reading from the N-terminus, the 191-residue chain is MSSLWIAIAAVSAIALVSGLILGFAARRFQVEADPIVERIDALLPQSQCGQCGYPGCRPYAEAVANGEKINRCAPGGEAVMRNIAALLAVDPQPLEGDGVQSEPQRQVALIDEANCIGCTKCIQSCPVDAIVGATRALHTVISDQCTGCGLCLPPCPTSCIQLVPVPTTTATWKWNLQTIPVHILEVERHV.

Positions 1-26 (MSSLWIAIAAVSAIALVSGLILGFAA) are hydrophobic. Residues 32–90 (EADPIVERIDALLPQSQCGQCGYPGCRPYAEAVANGEKINRCAPGGEAVMRNIAALLAV) enclose the 4Fe-4S domain. Residues Cys49, Cys52, Cys57, Cys73, Cys116, Cys119, Cys122, Cys126, Cys146, Cys149, Cys152, and Cys156 each contribute to the [4Fe-4S] cluster site. 4Fe-4S ferredoxin-type domains are found at residues 107–136 (QVAL…GATR) and 137–166 (ALHT…LVPV).

The protein belongs to the 4Fe4S bacterial-type ferredoxin family. RnfB subfamily. As to quaternary structure, the complex is composed of six subunits: RnfA, RnfB, RnfC, RnfD, RnfE and RnfG. [4Fe-4S] cluster serves as cofactor.

Its subcellular location is the cell inner membrane. Part of a membrane-bound complex that couples electron transfer with translocation of ions across the membrane. This is Ion-translocating oxidoreductase complex subunit B from Edwardsiella ictaluri (strain 93-146).